The primary structure comprises 347 residues: Virulence plasmid protein pGP2-D (347 aa).

The protein is Virulence plasmid protein pGP2-D of Chlamydia psittaci (Chlamydophila psittaci).